Consider the following 759-residue polypeptide: DNA replication licensing factor mcm-5 (759 aa).

Positions 330–536 constitute an MCM domain; the sequence is AYELIAKSIA…KDATLAKHVI (207 aa). R370 contacts ADP. An Arginine finger motif is present at residues 511–514; the sequence is SRFD.

It belongs to the MCM family. As to quaternary structure, component of the mcm2-7 complex. The complex forms a toroidal hexameric ring with the proposed subunit order mcm2-mcm6-mcm4-mcm7-mcm3-mcm5 (By simililarity).

It localises to the nucleus. The protein resides in the cytoplasm. It is found in the cytosol. It carries out the reaction ATP + H2O = ADP + phosphate + H(+). In terms of biological role, acts as a component of the MCM2-7 complex (MCM complex) which is the replicative helicase essential for 'once per cell cycle' DNA replication initiation and elongation in eukaryotic cells. Core component of CDC45-MCM-GINS (CMG) helicase, the molecular machine that unwinds template DNA during replication, and around which the replisome is built. The active ATPase sites in the MCM2-7 ring are formed through the interaction surfaces of two neighboring subunits such that a critical structure of a conserved arginine finger motif is provided in trans relative to the ATP-binding site of the Walker A box of the adjacent subunit. The six ATPase active sites, however, are likely to contribute differentially to the complex helicase activity. This is DNA replication licensing factor mcm-5 (mcm-5) from Caenorhabditis elegans.